The following is a 519-amino-acid chain: Cell division cycle protein 20 homolog B (519 aa).

Residues 79-98 (QSQTRALSSDSFGEEQSTTY) are compositionally biased toward polar residues. The segment at 79-133 (QSQTRALSSDSFGEEQSTTYLPEASGSVLKTPPEKETLTLGSRKEQLKTPSKGIS) is disordered. Positions 110–125 (PPEKETLTLGSRKEQL) are enriched in basic and acidic residues. WD repeat units follow at residues 229–266 (RNDY…GIEN), 271–310 (LTCN…RLRN), 311–341 (MLGH…YHHD), 353–392 (RHKQ…SAQG), 399–441 (TQST…SIQT), 443–484 (STNS…RSGG), and 487–519 (GHRG…WNCY).

Belongs to the WD repeat CDC20/Fizzy family. Expressed in multiciliated cells (MCCs).

It is found in the cytoplasm. Protein regulator of centriole-deuterosome disengagement and subsequently participates in the ciliogenesis in multiciliated cells (MCCs). This Homo sapiens (Human) protein is Cell division cycle protein 20 homolog B.